The primary structure comprises 364 residues: MEPLLSFKGVTKGFDDVTILNKMDLEIESGHFYTLLGPSGCGKTTILKLIAGFEQPDDGDIIYLNKSIGELPANKRKVNTVFQDYALFPHLNVYDNIAFGLKLKKHSKKDIDKKVIDALKLVKLSGYEQRNINEMSGGQKQRVAIARAIVNEPEILLLDESLSALDLKLRTEMQYELRELQKRLGITFIFVTHDQEEALALSDYIFVMKDGKIQQFGTPTDIYDEPVNRFVADFIGESNIVEGKMVEDFVVNIYGQDFECVDAGIPSGKNVEVVIRPEDISLIEADKGLFKATVDSMLFRGVHYEICCIDRKGYEWVIQTTKKAEVGSEVGLYFDPEAIHIMVPGETEEEFDKRIESYEEFDNA.

One can recognise an ABC transporter domain in the interval 5-235 (LSFKGVTKGF…PVNRFVADFI (231 aa)). 37–44 (GPSGCGKT) contacts ATP.

The protein belongs to the ABC transporter superfamily. Spermidine/putrescine importer (TC 3.A.1.11.1) family. In terms of assembly, the complex is composed of two ATP-binding proteins (PotA), two transmembrane proteins (PotB and PotC) and a solute-binding protein (PotD).

It localises to the cell membrane. The enzyme catalyses ATP + H2O + polyamine-[polyamine-binding protein]Side 1 = ADP + phosphate + polyamineSide 2 + [polyamine-binding protein]Side 1.. Functionally, part of the ABC transporter complex PotABCD involved in spermidine/putrescine import. Responsible for energy coupling to the transport system. The protein is Spermidine/putrescine import ATP-binding protein PotA of Staphylococcus haemolyticus (strain JCSC1435).